The following is a 219-amino-acid chain: Swarming motility regulation protein RssB (219 aa).

Positions 2-116 constitute a Response regulatory domain; the sequence is NILLVEDDLQ…ELISRVKAVN (115 aa). D51 carries the post-translational modification 4-aspartylphosphate. A DNA-binding region (ompR/PhoB-type) is located at residues 124-218; sequence SQTWSLGALY…VRGIGYLLKK (95 aa).

The protein resides in the cytoplasm. Functionally, member of the two-component regulatory system RssA/RssB involved in regulation of swarming motility which has been shown to be inhibited by saturated fatty acids. RssA/RssB regulates cellular fatty acid composition, hemolysin production and cell surface topography. RssA/RssB negatively regulates the activity of SlhBA. It can also act as a negative regulator for the control of the swarming initiation. RssB binds its own promoter. The sequence is that of Swarming motility regulation protein RssB (rssB) from Serratia marcescens.